The primary structure comprises 621 residues: Bifunctional 3'-phosphoadenosine 5'-phosphosulfate synthase 2 (621 aa).

Positions 1–216 (MSANFKMNHK…VVELLQEQNI (216 aa)) are adenylyl-sulfate kinase. ATP is bound at residue 53-58 (GAGKTT). Adenosine 5'-phosphosulfate is bound by residues 80 to 83 (DNVR), Phe92, 97 to 100 (REEN), 123 to 124 (IS), Lys162, and 175 to 176 (GF). ATP contacts are provided by residues Ser198, 415-418 (QLRN), 517-521 (GRDPA), and Ala559. The interval 225 to 621 (IHELFVPENK…DYYRSLEKTN (397 aa)) is sulfate adenylyltransferase.

In the N-terminal section; belongs to the APS kinase family. It in the C-terminal section; belongs to the sulfate adenylyltransferase family. Expressed in liver, cartilage, skin and brain.

The catalysed reaction is sulfate + ATP + H(+) = adenosine 5'-phosphosulfate + diphosphate. It catalyses the reaction adenosine 5'-phosphosulfate + ATP = 3'-phosphoadenylyl sulfate + ADP + H(+). The protein operates within sulfur metabolism; sulfate assimilation. Functionally, bifunctional enzyme with both ATP sulfurylase and APS kinase activity, which mediates two steps in the sulfate activation pathway. The first step is the transfer of a sulfate group to ATP to yield adenosine 5'-phosphosulfate (APS), and the second step is the transfer of a phosphate group from ATP to APS yielding 3'-phosphoadenylylsulfate/PAPS, the activated sulfate donor used by sulfotransferases. In mammals, PAPS is the sole source of sulfate while APS appears to only be an intermediate in the sulfate-activation pathway. May have an important role in skeletogenesis during postnatal growth. The chain is Bifunctional 3'-phosphoadenosine 5'-phosphosulfate synthase 2 (Papss2) from Mus musculus (Mouse).